The primary structure comprises 360 residues: Phospho-N-acetylmuramoyl-pentapeptide-transferase (360 aa).

Helical transmembrane passes span glycine 26 to alanine 46, glycine 70 to tryptophan 90, glycine 94 to valine 114, leucine 136 to valine 156, phenylalanine 164 to isoleucine 184, glycine 199 to serine 219, serine 236 to phenylalanine 256, valine 263 to valine 283, valine 289 to valine 309, and alanine 339 to isoleucine 359.

It belongs to the glycosyltransferase 4 family. MraY subfamily. It depends on Mg(2+) as a cofactor.

Its subcellular location is the cell inner membrane. The enzyme catalyses UDP-N-acetyl-alpha-D-muramoyl-L-alanyl-gamma-D-glutamyl-meso-2,6-diaminopimeloyl-D-alanyl-D-alanine + di-trans,octa-cis-undecaprenyl phosphate = di-trans,octa-cis-undecaprenyl diphospho-N-acetyl-alpha-D-muramoyl-L-alanyl-D-glutamyl-meso-2,6-diaminopimeloyl-D-alanyl-D-alanine + UMP. It participates in cell wall biogenesis; peptidoglycan biosynthesis. In terms of biological role, catalyzes the initial step of the lipid cycle reactions in the biosynthesis of the cell wall peptidoglycan: transfers peptidoglycan precursor phospho-MurNAc-pentapeptide from UDP-MurNAc-pentapeptide onto the lipid carrier undecaprenyl phosphate, yielding undecaprenyl-pyrophosphoryl-MurNAc-pentapeptide, known as lipid I. This chain is Phospho-N-acetylmuramoyl-pentapeptide-transferase, found in Acidithiobacillus ferrooxidans (strain ATCC 23270 / DSM 14882 / CIP 104768 / NCIMB 8455) (Ferrobacillus ferrooxidans (strain ATCC 23270)).